The sequence spans 186 residues: Nicotinamidase/pyrazinamidase (186 aa).

The Proton acceptor role is filled by aspartate 8. Positions 49, 51, 57, and 71 each coordinate Fe cation. The active site involves lysine 96. Cysteine 138 acts as the Nucleophile in catalysis.

The protein belongs to the isochorismatase family. Monomer. The cofactor is Mn(2+). Requires Fe(2+) as cofactor.

The enzyme catalyses nicotinamide + H2O = nicotinate + NH4(+). It carries out the reaction pyrazinamide + H2O = pyrazine-2-carboxylate + NH4(+). Its pathway is cofactor biosynthesis; nicotinate biosynthesis; nicotinate from nicotinamide: step 1/1. With respect to regulation, is inhibited by Cu(2+), Zn(2+) and Fe(3+). Functionally, catalyzes the deamidation of nicotinamide (NAM) into nicotinate. Likely functions in the cyclical salvage pathway for production of NAD from nicotinamide. Is involved in the activation of the first-line antituberculous drug pyrazinamide (PZA) by converting it into the active form, pyrazinoic acid. The sequence is that of Nicotinamidase/pyrazinamidase from Mycobacterium tuberculosis (strain ATCC 25618 / H37Rv).